Here is a 208-residue protein sequence, read N- to C-terminus: Small ribosomal subunit protein uS3 (208 aa).

Positions 38 to 106 (IRDYIKARLY…EILIDIQEVR (69 aa)) constitute a KH type-2 domain.

The protein belongs to the universal ribosomal protein uS3 family. In terms of assembly, part of the 30S ribosomal subunit. Forms a tight complex with proteins S10 and S14.

In terms of biological role, binds the lower part of the 30S subunit head. Binds mRNA in the 70S ribosome, positioning it for translation. The chain is Small ribosomal subunit protein uS3 from Syntrophobacter fumaroxidans (strain DSM 10017 / MPOB).